A 178-amino-acid polypeptide reads, in one-letter code: Large ribosomal subunit protein uL6 (178 aa).

The protein belongs to the universal ribosomal protein uL6 family. As to quaternary structure, part of the 50S ribosomal subunit.

In terms of biological role, this protein binds to the 23S rRNA, and is important in its secondary structure. It is located near the subunit interface in the base of the L7/L12 stalk, and near the tRNA binding site of the peptidyltransferase center. This is Large ribosomal subunit protein uL6 from Geobacillus kaustophilus (strain HTA426).